Reading from the N-terminus, the 556-residue chain is Glucose-6-phosphate isomerase (556 aa).

Glu360 functions as the Proton donor in the catalytic mechanism. Residues His391 and Lys519 contribute to the active site.

It belongs to the GPI family.

The protein resides in the cytoplasm. It catalyses the reaction alpha-D-glucose 6-phosphate = beta-D-fructose 6-phosphate. It participates in carbohydrate biosynthesis; gluconeogenesis. Its pathway is carbohydrate degradation; glycolysis; D-glyceraldehyde 3-phosphate and glycerone phosphate from D-glucose: step 2/4. Its function is as follows. Catalyzes the reversible isomerization of glucose-6-phosphate to fructose-6-phosphate. This is Glucose-6-phosphate isomerase from Acinetobacter baumannii (strain AB0057).